A 108-amino-acid polypeptide reads, in one-letter code: Transmembrane protein 213 (108 aa).

An N-terminal signal peptide occupies residues Met-1–Ala-27. Over Glu-28–Tyr-71 the chain is Extracellular. Asn-34 carries an N-linked (GlcNAc...) asparagine glycan. A helical membrane pass occupies residues Gly-72–Val-92. The Cytoplasmic segment spans residues Asp-93–Ala-108.

It is found in the membrane. The polypeptide is Transmembrane protein 213 (TMEM213) (Bos taurus (Bovine)).